The chain runs to 763 residues: Phosphoglycerol transferase I (763 aa).

A run of 4 helical transmembrane segments spans residues 4–19, 26–48, 76–98, and 105–127; these read LLSF…IYAW, WWFA…LFAS, YILP…GWIL, and PHHF…ASPA.

The protein belongs to the OpgB family.

It is found in the cell inner membrane. The enzyme catalyses a phosphatidylglycerol + a membrane-derived-oligosaccharide D-glucose = a 1,2-diacyl-sn-glycerol + a membrane-derived-oligosaccharide 6-(glycerophospho)-D-glucose.. Its pathway is glycan metabolism; osmoregulated periplasmic glucan (OPG) biosynthesis. Its function is as follows. Transfers a phosphoglycerol residue from phosphatidylglycerol to the membrane-bound nascent glucan backbones. This is Phosphoglycerol transferase I from Escherichia coli O6:H1 (strain CFT073 / ATCC 700928 / UPEC).